The sequence spans 368 residues: Major capsid protein (368 aa).

The protein belongs to the lambda phage major capsid protein family. In terms of assembly, homomultimer.

It is found in the virion. The protein resides in the host cytoplasm. In terms of biological role, assembles to form an icosahedral capsid. The assembly is primed by the interaction between capsid assembly protease and portal dodecamer, and major capsid proteins assemble cooperatively to form the procapsid with the help of capsid scaffolding protein. Major capsid protein forms hexons and pentons of the icosahedron. Viral genomic DNA is packaged into the procapsid through the portal vertex. The packaging triggers a dramatic reconfiguration of the capsid shell. The protein is Major capsid protein of Salmonella (Bacteriophage Felix O1).